We begin with the raw amino-acid sequence, 248 residues long: Probable transcriptional regulatory protein Smed_2641 (248 aa).

This sequence belongs to the TACO1 family.

The protein resides in the cytoplasm. The sequence is that of Probable transcriptional regulatory protein Smed_2641 from Sinorhizobium medicae (strain WSM419) (Ensifer medicae).